A 349-amino-acid chain; its full sequence is Tribbles homolog 3 (349 aa).

The interval 1 to 122 is interaction with DDIT3/CHOP; sequence MRATSLAASA…QHVARPTEVL (122 aa). Positions 35-57 are disordered; that stretch reads VRDEPEPGPTPSLPPASDLSPAV. The 248-residue stretch at 63–310 folds into the Protein kinase domain; the sequence is LGPYILLERE…ALGILLHPWL (248 aa). Residues 317–349 form a disordered region; the sequence is VSPPRSDRREMDQVVPDGPQLEEAEEGEVGLYG. Acidic residues predominate over residues 336 to 349; that stretch reads QLEEAEEGEVGLYG.

The protein belongs to the protein kinase superfamily. CAMK Ser/Thr protein kinase family. Tribbles subfamily. In terms of assembly, interacts with AKT1, AKT2, MAP2K1 and MAP2K7. Interacts with ATF4. Interacts with DDIT3/CHOP and inhibits its interaction with EP300/P300. Interacts with APOBEC3C. Interacts (via N-terminus) with APOBEC3A. Interacts with RELA. As to expression, detected only in the lung. Not detected in the heart, brain, spleen, liver, skeletal muscle, kidney and testis.

It is found in the nucleus. Functionally, inactive protein kinase which acts as a regulator of the integrated stress response (ISR), a process for adaptation to various stress. Inhibits the transcriptional activity of DDIT3/CHOP and is involved in DDIT3/CHOP-dependent cell death during ER stress. May play a role in programmed neuronal cell death but does not appear to affect non-neuronal cells. Acts as a negative feedback regulator of the ATF4-dependent transcription during the ISR: while TRIB3 expression is promoted by ATF4, TRIB3 protein interacts with ATF4 and inhibits ATF4 transcription activity. Disrupts insulin signaling by binding directly to Akt kinases and blocking their activation. May bind directly to and mask the 'Thr-308' phosphorylation site in AKT1. Interacts with the NF-kappa-B transactivator p65 RELA and inhibits its phosphorylation and thus its transcriptional activation activity. Interacts with MAPK kinases and regulates activation of MAP kinases. Can inhibit APOBEC3A editing of nuclear DNA. This Rattus norvegicus (Rat) protein is Tribbles homolog 3 (Trib3).